Here is a 307-residue protein sequence, read N- to C-terminus: Pseudouridine-5'-phosphate glycosidase (307 aa).

The active-site Proton donor is the Glu25. Substrate contacts are provided by Lys86 and Val106. Asp138 contacts Mn(2+). Ser140–Asp142 lines the substrate pocket. The active-site Nucleophile is Lys159.

This sequence belongs to the pseudouridine-5'-phosphate glycosidase family. As to quaternary structure, homotrimer. Mn(2+) is required as a cofactor.

It catalyses the reaction D-ribose 5-phosphate + uracil = psi-UMP + H2O. In terms of biological role, catalyzes the reversible cleavage of pseudouridine 5'-phosphate (PsiMP) to ribose 5-phosphate and uracil. Functions biologically in the cleavage direction, as part of a pseudouridine degradation pathway. This is Pseudouridine-5'-phosphate glycosidase from Caldanaerobacter subterraneus subsp. tengcongensis (strain DSM 15242 / JCM 11007 / NBRC 100824 / MB4) (Thermoanaerobacter tengcongensis).